Reading from the N-terminus, the 366-residue chain is Aminomethyltransferase (366 aa).

Belongs to the GcvT family. As to quaternary structure, the glycine cleavage system is composed of four proteins: P, T, L and H.

The enzyme catalyses N(6)-[(R)-S(8)-aminomethyldihydrolipoyl]-L-lysyl-[protein] + (6S)-5,6,7,8-tetrahydrofolate = N(6)-[(R)-dihydrolipoyl]-L-lysyl-[protein] + (6R)-5,10-methylene-5,6,7,8-tetrahydrofolate + NH4(+). The glycine cleavage system catalyzes the degradation of glycine. The chain is Aminomethyltransferase from Neisseria meningitidis serogroup A / serotype 4A (strain DSM 15465 / Z2491).